The following is an 897-amino-acid chain: F-BAR domain only protein 1 (897 aa).

Positions 1-276 (MIHFFHTLQG…VGFEEYLSSL (276 aa)) are mediates membrane-binding. The region spanning 2-248 (IHFFHTLQGE…NVENIGIENL (247 aa)) is the F-BAR domain. A coiled-coil region spans residues 134–154 (LQKTREGYHSKCVELERLRKE). The disordered stretch occupies residues 475–537 (VEDSGLDSPS…PNPAPSSQSN (63 aa)). A compositionally biased stretch (polar residues) spans 501-520 (PSSQSQSKDSINAASQSRGG). Residues 630–894 (SWPVAAAITE…RFATGKYMAG (265 aa)) form the MHD domain.

This sequence belongs to the FCHO family. May oligomerize and form homotetramer. Interacts with acvr1l/alk8; linking this receptor to clathrin-mediated endocytosis.

Its subcellular location is the membrane. It is found in the clathrin-coated pit. In terms of biological role, may function in an early step of clathrin-mediated endocytosis. May regulate Bmp signaling by regulating clathrin-mediated endocytosis of Bmp receptors. The polypeptide is F-BAR domain only protein 1 (fcho1) (Danio rerio (Zebrafish)).